We begin with the raw amino-acid sequence, 408 residues long: MSWDQVWIDINIATMSPKISEPYGAITDAALAVQDGKIAWVGKRSDLPEFDVFGTPIYKGKGGWITPGLIDAHTHLIFAGNRANEFELRLKGASYEEIARSGGGIISTVNACREADEAELFELGRQRLNALAKEGVTTVEIKSGYGLDIETELKILRVARELGKHHHVDVKTTFLGAHAIPPEYKNDSDAYVDLVINEMLPKVMAENLADAVDVFCENIAFNLEQTERVLTAAIDAGLDIKLHAEQLSNMGGSAMAARLGAKSVDHIEYLDEAGVKALSESGTCATLLPGAFYFLRETQHPPIDLLRKYQVPMVVASDYNPGSSPLCSSLLMLNMACTLLRLTPEEALAGMTRNAAKALGIDDHVGVIEVGMTADFCIWNISTPAELAYTYGVASCVDVVKNGNLVHQ.

The Fe(3+) site is built by H73 and H75. 2 residues coordinate Zn(2+): H73 and H75. Positions 82, 145, and 178 each coordinate 4-imidazolone-5-propanoate. Residue Y145 coordinates N-formimidoyl-L-glutamate. H243 contributes to the Fe(3+) binding site. A Zn(2+)-binding site is contributed by H243. Q246 contributes to the 4-imidazolone-5-propanoate binding site. Residue D318 coordinates Fe(3+). A Zn(2+)-binding site is contributed by D318. N-formimidoyl-L-glutamate-binding residues include N320 and G322. Residue S323 coordinates 4-imidazolone-5-propanoate.

It belongs to the metallo-dependent hydrolases superfamily. HutI family. It depends on Zn(2+) as a cofactor. Fe(3+) serves as cofactor.

It localises to the cytoplasm. It carries out the reaction 4-imidazolone-5-propanoate + H2O = N-formimidoyl-L-glutamate. Its pathway is amino-acid degradation; L-histidine degradation into L-glutamate; N-formimidoyl-L-glutamate from L-histidine: step 3/3. Functionally, catalyzes the hydrolytic cleavage of the carbon-nitrogen bond in imidazolone-5-propanoate to yield N-formimidoyl-L-glutamate. It is the third step in the universal histidine degradation pathway. This chain is Imidazolonepropionase, found in Shewanella halifaxensis (strain HAW-EB4).